The following is a 340-amino-acid chain: Methionine import ATP-binding protein MetN 2 (340 aa).

The ABC transporter domain occupies 2 to 241 (ITLQNVVKEY…PKEKVTQRFV (240 aa)). 38–45 (GYSGAGKS) serves as a coordination point for ATP.

This sequence belongs to the ABC transporter superfamily. Methionine importer (TC 3.A.1.24) family. In terms of assembly, the complex is composed of two ATP-binding proteins (MetN), two transmembrane proteins (MetI) and a solute-binding protein (MetQ).

The protein resides in the cell membrane. It carries out the reaction L-methionine(out) + ATP + H2O = L-methionine(in) + ADP + phosphate + H(+). It catalyses the reaction D-methionine(out) + ATP + H2O = D-methionine(in) + ADP + phosphate + H(+). Functionally, part of the ABC transporter complex MetNIQ involved in methionine import. Responsible for energy coupling to the transport system. This chain is Methionine import ATP-binding protein MetN 2, found in Listeria innocua serovar 6a (strain ATCC BAA-680 / CLIP 11262).